A 105-amino-acid chain; its full sequence is Nucleoid-associated protein RPC_4847 (105 aa).

Belongs to the YbaB/EbfC family. Homodimer.

It is found in the cytoplasm. The protein localises to the nucleoid. Its function is as follows. Binds to DNA and alters its conformation. May be involved in regulation of gene expression, nucleoid organization and DNA protection. The polypeptide is Nucleoid-associated protein RPC_4847 (Rhodopseudomonas palustris (strain BisB18)).